Reading from the N-terminus, the 328-residue chain is MSAGGEHLKDEGTRRQVVLAGGIAGLISRFCIAPLDVVKIRLQLQIHSLSDPTSHAHITGPVYKGTLSTIKTILREEGLTGLWKGNIPAELLYVCYGGIQFTTYRTTTQLLAQLDPHRLPQPIESFISGALGGGIATAATYPLDLLRTRFAAQGSGDNRVYESLFASLRDIAKTEGTVGFFRGCSAAVGQIVPYMGLFFATYEALRPVMATAPELSPIPLPPGSGDAAAGIVASVLAKTGVFPLDLVRKRLQVQGPTRALYVHRNIPEYRGVFNTMGLIFRTQGLRGLYRGLTVSLVKAAPASAVTMWTYERALKLLREHEIAAGRDE.

3 Solcar repeats span residues 12-110 (GTRR…TTQL), 120-208 (PQPI…LRPV), and 221-316 (PPGS…ALKL). Transmembrane regions (helical) follow at residues 17 to 37 (VVLAGGIAGLISRFCIAPLDV), 79 to 99 (LTGLWKGNIPAELLYVCYGGI), 126 to 146 (FISGALGGGIATAATYPLDLL), 185 to 205 (SAAVGQIVPYMGLFFATYEAL), 227 to 247 (AAAGIVASVLAKTGVFPLDLV), and 291 to 308 (GLTVSLVKAAPASAVTMW).

It belongs to the mitochondrial carrier (TC 2.A.29) family.

Its subcellular location is the mitochondrion inner membrane. Its function is as follows. Mitochondrial transporter that mediates uptake of thiamine pyrophosphate (ThPP) into mitochondria. This chain is Mitochondrial thiamine pyrophosphate carrier 1 (tpc1), found in Emericella nidulans (strain FGSC A4 / ATCC 38163 / CBS 112.46 / NRRL 194 / M139) (Aspergillus nidulans).